Reading from the N-terminus, the 458-residue chain is tRNA modification GTPase MnmE (458 aa).

3 residues coordinate (6S)-5-formyl-5,6,7,8-tetrahydrofolate: Arg22, Glu84, and Arg123. The 160-residue stretch at 220 to 379 (GIATAIIGRP…LETAIADLFF (160 aa)) folds into the TrmE-type G domain. Position 230 (Asn230) interacts with K(+). GTP contacts are provided by residues 230–235 (NVGKSS), 249–255 (TDIAGTT), and 274–277 (DTAG). Residue Ser234 coordinates Mg(2+). K(+)-binding residues include Thr249, Ile251, and Thr254. Thr255 provides a ligand contact to Mg(2+). Lys458 is a (6S)-5-formyl-5,6,7,8-tetrahydrofolate binding site.

The protein belongs to the TRAFAC class TrmE-Era-EngA-EngB-Septin-like GTPase superfamily. TrmE GTPase family. As to quaternary structure, homodimer. Heterotetramer of two MnmE and two MnmG subunits. The cofactor is K(+).

It localises to the cytoplasm. Exhibits a very high intrinsic GTPase hydrolysis rate. Involved in the addition of a carboxymethylaminomethyl (cmnm) group at the wobble position (U34) of certain tRNAs, forming tRNA-cmnm(5)s(2)U34. In Bacillus cereus (strain ATCC 10987 / NRS 248), this protein is tRNA modification GTPase MnmE.